Consider the following 446-residue polypeptide: MSRKYFGTDGIRGRVGEYPITPDFMLKLGWAAGMAFRKQGHCRVLVGKDTRISGYMFESALEAGLSAAGADVMLLGPMPTPAIAYLTRTFHAEAGIVISASHNPHDDNGIKFFSGQGTKLPDEVELMIEELLDQPMTVVESGKLGKVSRINDAAGRYIEFCKSSVPSSTSFEGLKLVVDCAHGATYKVAPSVFRELGADVTVLHAQPDGLNINEGCGSTHIESLQAAVLVGHADLGIAFDGDGDRVLMVDHTGAIVDGDELLFIIARDLQEHGKLQGGVVGTLMSNLGLELALKDLDIPFVRAKVGDRYVMAELLEREWLVGGENSGHVVCCNHTTTGDAIIAALQVLMALKRRGETLAQARQALRKCPQVLINVRFGASKVDPLEHPAVKEASAKVTEALAGRGRVLLRKSGTEPLVRVMVEGEDESQVRAHAEALAKLVGEVCV.

The active-site Phosphoserine intermediate is the Ser101. Mg(2+) is bound by residues Ser101, Asp240, Asp242, and Asp244. At Ser101 the chain carries Phosphoserine.

The protein belongs to the phosphohexose mutase family. It depends on Mg(2+) as a cofactor. Activated by phosphorylation.

It catalyses the reaction alpha-D-glucosamine 1-phosphate = D-glucosamine 6-phosphate. Its function is as follows. Catalyzes the conversion of glucosamine-6-phosphate to glucosamine-1-phosphate. This Pseudomonas putida (strain ATCC 47054 / DSM 6125 / CFBP 8728 / NCIMB 11950 / KT2440) protein is Phosphoglucosamine mutase.